Here is a 189-residue protein sequence, read N- to C-terminus: MNIVSTLLLALAMSADAFAAAVSKGAMLHRPRIIEALRTGMIFGVIEATTPLVGWSLGRVAADYVTAWDHWIAFSILAFLGIRMTWSGLKHDGKVVEKSRSHSFILLAMTALGTSIDAMSVGVSLAFLDIDIVPVAFAIGIVTCIMVSAGVMLGRVLGSASKHTVEIIGGLILIGIGSLILYKHLYGAA.

The next 6 membrane-spanning stretches (helical) occupy residues isoleucine 3 to serine 23, methionine 41 to alanine 61, alanine 62 to isoleucine 82, serine 103 to valine 123, isoleucine 132 to methionine 152, and isoleucine 167 to glycine 187.

It belongs to the MntP (TC 9.B.29) family.

It localises to the cell inner membrane. In terms of biological role, probably functions as a manganese efflux pump. The chain is Putative manganese efflux pump MntP from Methylobacillus flagellatus (strain ATCC 51484 / DSM 6875 / VKM B-1610 / KT).